The primary structure comprises 302 residues: Digeranylgeranylglyceryl phosphate synthase (302 aa).

The next 8 helical transmembrane spans lie at 21 to 41 (LVVA…IYGG), 43 to 63 (IVSS…AGGY), 103 to 123 (IGLI…FAVL), 144 to 164 (IVIA…ASCM), 167 to 187 (GKVV…LLVL), 218 to 238 (AYMA…FPYI), 244 to 264 (MAYL…LAIL), and 282 to 302 (ARSA…AGLM).

Belongs to the UbiA prenyltransferase family. DGGGP synthase subfamily. The cofactor is Mg(2+).

Its subcellular location is the cell membrane. The enzyme catalyses sn-3-O-(geranylgeranyl)glycerol 1-phosphate + (2E,6E,10E)-geranylgeranyl diphosphate = 2,3-bis-O-(geranylgeranyl)-sn-glycerol 1-phosphate + diphosphate. Its pathway is membrane lipid metabolism; glycerophospholipid metabolism. Its function is as follows. Prenyltransferase that catalyzes the transfer of the geranylgeranyl moiety of geranylgeranyl diphosphate (GGPP) to the C2 hydroxyl of (S)-3-O-geranylgeranylglyceryl phosphate (GGGP). This reaction is the second ether-bond-formation step in the biosynthesis of archaeal membrane lipids. The polypeptide is Digeranylgeranylglyceryl phosphate synthase (Hyperthermus butylicus (strain DSM 5456 / JCM 9403 / PLM1-5)).